We begin with the raw amino-acid sequence, 309 residues long: Glutaminase (309 aa).

Substrate-binding residues include Ser64, Asn114, Glu160, Asn167, Tyr191, Tyr243, and Val261.

Belongs to the glutaminase family. Homotetramer.

It carries out the reaction L-glutamine + H2O = L-glutamate + NH4(+). In Rhizobium leguminosarum bv. trifolii (strain WSM2304), this protein is Glutaminase.